The chain runs to 849 residues: DNA mismatch repair protein MutS (849 aa).

ATP is bound at residue 602–609 (GPNMSGKS).

The protein belongs to the DNA mismatch repair MutS family.

Its function is as follows. This protein is involved in the repair of mismatches in DNA. It is possible that it carries out the mismatch recognition step. This protein has a weak ATPase activity. The polypeptide is DNA mismatch repair protein MutS (Streptococcus sanguinis (strain SK36)).